Consider the following 338-residue polypeptide: D-erythrose-4-phosphate dehydrogenase (338 aa).

Residue 11–12 (RI) coordinates NAD(+). Substrate contacts are provided by residues 153–155 (SCT), Arg-199, 212–213 (TK), and Arg-235. The active-site Nucleophile is the Cys-154. Asn-317 provides a ligand contact to NAD(+).

It belongs to the glyceraldehyde-3-phosphate dehydrogenase family. Epd subfamily. Homotetramer.

The protein resides in the cytoplasm. The catalysed reaction is D-erythrose 4-phosphate + NAD(+) + H2O = 4-phospho-D-erythronate + NADH + 2 H(+). It participates in cofactor biosynthesis; pyridoxine 5'-phosphate biosynthesis; pyridoxine 5'-phosphate from D-erythrose 4-phosphate: step 1/5. Functionally, catalyzes the NAD-dependent conversion of D-erythrose 4-phosphate to 4-phosphoerythronate. The polypeptide is D-erythrose-4-phosphate dehydrogenase (Shewanella loihica (strain ATCC BAA-1088 / PV-4)).